The sequence spans 78 residues: Acyl carrier protein (78 aa).

The Carrier domain maps to 2–77 (STIEERVKKI…AAIDYIEAAN (76 aa)). Ser-37 bears the O-(pantetheine 4'-phosphoryl)serine mark.

This sequence belongs to the acyl carrier protein (ACP) family. In terms of processing, 4'-phosphopantetheine is transferred from CoA to a specific serine of apo-ACP by AcpS. This modification is essential for activity because fatty acids are bound in thioester linkage to the sulfhydryl of the prosthetic group.

The protein resides in the cytoplasm. It functions in the pathway lipid metabolism; fatty acid biosynthesis. In terms of biological role, carrier of the growing fatty acid chain in fatty acid biosynthesis. This is Acyl carrier protein from Edwardsiella ictaluri (strain 93-146).